A 378-amino-acid polypeptide reads, in one-letter code: MKIVADENMPFVEALFGGLGDVVRVNGRSLSAKDLKDADVLLVRSVTKVNQTLLQDCQSLKFVGSATIGTDHIDQAYLKHRGIPFANAPGCNATGVGEYAFIAALELAQREQVNLKDKVIGIVGAGNTGMAAAKCFAAFGNKVLVCDPFKTQDMLYFPLVGLDELIQQADIISLHVPLSDNGPYKTWYLFDEARLESLTPNTWLFNCCRGEVIDNRALIEFKRRRDDIKLVLDVWQGEPHPMAELVPLTEFATPHIAGYSLEGKARGTFMLYQALATSLNLPVKASLQSLLPSHFVNQLGLASQTELTQGQLLSLARLVYDLRDDDKNFRQAFDKTNGFDQLRKNHTHRREFSALTLASSGGCEVNWLTKLGFSGVGR.

Substrate is bound by residues Ser45 and Thr67. Asp147 is a binding site for NAD(+). Residue Arg209 is part of the active site. An NAD(+)-binding site is contributed by Asp233. Residue Glu238 is part of the active site. The Proton donor role is filled by His255. Gly258 is an NAD(+) binding site. Residue Tyr259 participates in substrate binding.

This sequence belongs to the D-isomer specific 2-hydroxyacid dehydrogenase family. PdxB subfamily. As to quaternary structure, homodimer.

The protein localises to the cytoplasm. The enzyme catalyses 4-phospho-D-erythronate + NAD(+) = (R)-3-hydroxy-2-oxo-4-phosphooxybutanoate + NADH + H(+). It participates in cofactor biosynthesis; pyridoxine 5'-phosphate biosynthesis; pyridoxine 5'-phosphate from D-erythrose 4-phosphate: step 2/5. Catalyzes the oxidation of erythronate-4-phosphate to 3-hydroxy-2-oxo-4-phosphonooxybutanoate. The chain is Erythronate-4-phosphate dehydrogenase from Shewanella denitrificans (strain OS217 / ATCC BAA-1090 / DSM 15013).